The sequence spans 91 residues: DNA-directed RNA polymerase subunit omega (91 aa).

It belongs to the RNA polymerase subunit omega family. In terms of assembly, the RNAP catalytic core consists of 2 alpha, 1 beta, 1 beta' and 1 omega subunit. When a sigma factor is associated with the core the holoenzyme is formed, which can initiate transcription. The rRNA transcription and antitermination complex (rrnTAC) consists of RNAP, NusA, NusB, NusE (rpsJ), NusG, SubB, ribosomal protein S4, DNA and precursor rRNA; S4 is more flexible than other subunits.

It catalyses the reaction RNA(n) + a ribonucleoside 5'-triphosphate = RNA(n+1) + diphosphate. Promotes RNA polymerase (RNAP) assembly. Latches the N- and C-terminal regions of the beta' subunit thereby facilitating its interaction with the beta and alpha subunits. Its function is as follows. Part of the processive rRNA transcription and antitermination complex (rrnTAC). The complex forms an RNA-chaperone ring around the RNA exit tunnel of RNAP. It supports rapid transcription and antitermination of rRNA operons, cotranscriptional rRNA folding, and annealing of distal rRNA regions to allow correct ribosome biogenesis. This is DNA-directed RNA polymerase subunit omega (rpoZ) from Escherichia coli (strain K12).